The primary structure comprises 246 residues: Transcription factor MYB13 (246 aa).

2 HTH myb-type domains span residues 9–61 (KIGL…INYL) and 62–116 (RPDI…KKRL). 2 consecutive DNA-binding regions (H-T-H motif) follow at residues 37–61 (WRALPKLAGLLRCGKSCRLRWINYL) and 89–112 (WSAIAAKLPGRTDNEIKNVWHTHL).

Expressed in roots and flowers. Expressed in shoot apex, axillary buds, at the basis of flowers and branching points of inflorescences.

It localises to the nucleus. Its function is as follows. Plays a regulatory role in meristem function. Functions as component of a regulatory network controlling the establishment and/or development of the shoot system by the regulation of apical meristem function. May play a role in tolerance to boric acid. The sequence is that of Transcription factor MYB13 from Arabidopsis thaliana (Mouse-ear cress).